The primary structure comprises 237 residues: 4-hydroxy-tetrahydrodipicolinate reductase (237 aa).

NAD(+) is bound by residues glycine 11 to methionine 16, glycine 92 to threonine 94, and glycine 116 to phenylalanine 119. The active-site Proton donor/acceptor is histidine 148. Histidine 149 is a (S)-2,3,4,5-tetrahydrodipicolinate binding site. Lysine 152 serves as the catalytic Proton donor. A (S)-2,3,4,5-tetrahydrodipicolinate-binding site is contributed by glycine 158–serine 159.

The protein belongs to the DapB family.

The protein localises to the cytoplasm. It carries out the reaction (S)-2,3,4,5-tetrahydrodipicolinate + NAD(+) + H2O = (2S,4S)-4-hydroxy-2,3,4,5-tetrahydrodipicolinate + NADH + H(+). The catalysed reaction is (S)-2,3,4,5-tetrahydrodipicolinate + NADP(+) + H2O = (2S,4S)-4-hydroxy-2,3,4,5-tetrahydrodipicolinate + NADPH + H(+). It functions in the pathway amino-acid biosynthesis; L-lysine biosynthesis via DAP pathway; (S)-tetrahydrodipicolinate from L-aspartate: step 4/4. In terms of biological role, catalyzes the conversion of 4-hydroxy-tetrahydrodipicolinate (HTPA) to tetrahydrodipicolinate. This chain is 4-hydroxy-tetrahydrodipicolinate reductase, found in Xylella fastidiosa (strain 9a5c).